Here is an 876-residue protein sequence, read N- to C-terminus: Alanine--tRNA ligase (876 aa).

Zn(2+)-binding residues include histidine 568, histidine 572, cysteine 669, and histidine 673.

It belongs to the class-II aminoacyl-tRNA synthetase family. The cofactor is Zn(2+).

It is found in the cytoplasm. It catalyses the reaction tRNA(Ala) + L-alanine + ATP = L-alanyl-tRNA(Ala) + AMP + diphosphate. Catalyzes the attachment of alanine to tRNA(Ala) in a two-step reaction: alanine is first activated by ATP to form Ala-AMP and then transferred to the acceptor end of tRNA(Ala). Also edits incorrectly charged Ser-tRNA(Ala) and Gly-tRNA(Ala) via its editing domain. This is Alanine--tRNA ligase from Sulfurihydrogenibium sp. (strain YO3AOP1).